We begin with the raw amino-acid sequence, 316 residues long: Acetaldehyde dehydrogenase (316 aa).

Position 11 to 14 (11 to 14 (SGNI)) interacts with NAD(+). Catalysis depends on C131, which acts as the Acyl-thioester intermediate. NAD(+) contacts are provided by residues 162–170 (SAGPGTRAN) and N289.

The protein belongs to the acetaldehyde dehydrogenase family. In terms of assembly, interacts with MhpE.

The catalysed reaction is acetaldehyde + NAD(+) + CoA = acetyl-CoA + NADH + H(+). The protein operates within aromatic compound metabolism; 3-phenylpropanoate degradation. Its function is as follows. Catalyzes the conversion of acetaldehyde to acetyl-CoA, using NAD(+) and coenzyme A. Is the final enzyme in the meta-cleavage pathway for the degradation of aromatic compounds. In Klebsiella pneumoniae subsp. pneumoniae (strain ATCC 700721 / MGH 78578), this protein is Acetaldehyde dehydrogenase.